A 205-amino-acid polypeptide reads, in one-letter code: Protein-L-isoaspartate O-methyltransferase (205 aa).

Residue serine 56 is part of the active site.

This sequence belongs to the methyltransferase superfamily. L-isoaspartyl/D-aspartyl protein methyltransferase family.

It is found in the cytoplasm. It carries out the reaction [protein]-L-isoaspartate + S-adenosyl-L-methionine = [protein]-L-isoaspartate alpha-methyl ester + S-adenosyl-L-homocysteine. In terms of biological role, catalyzes the methyl esterification of L-isoaspartyl residues in peptides and proteins that result from spontaneous decomposition of normal L-aspartyl and L-asparaginyl residues. It plays a role in the repair and/or degradation of damaged proteins. This is Protein-L-isoaspartate O-methyltransferase from Pyrobaculum arsenaticum (strain DSM 13514 / JCM 11321 / PZ6).